Reading from the N-terminus, the 214-residue chain is Small ribosomal subunit protein uS3c (214 aa).

The KH type-2 domain occupies 39 to 111 (IRTYLNKLAK…QLTINIIEVE (73 aa)).

Belongs to the universal ribosomal protein uS3 family. In terms of assembly, part of the 30S ribosomal subunit.

The protein localises to the plastid. It is found in the chloroplast. This Trieres chinensis (Marine centric diatom) protein is Small ribosomal subunit protein uS3c (rps3).